Here is a 576-residue protein sequence, read N- to C-terminus: Sulfite reductase [NADPH] hemoprotein beta-component (576 aa).

Residues Cys435, Cys441, Cys480, and Cys484 each contribute to the [4Fe-4S] cluster site. A siroheme-binding site is contributed by Cys484.

This sequence belongs to the nitrite and sulfite reductase 4Fe-4S domain family. In terms of assembly, alpha(8)-beta(8). The alpha component is a flavoprotein, the beta component is a hemoprotein. Siroheme is required as a cofactor. [4Fe-4S] cluster serves as cofactor.

It catalyses the reaction hydrogen sulfide + 3 NADP(+) + 3 H2O = sulfite + 3 NADPH + 4 H(+). Its pathway is sulfur metabolism; hydrogen sulfide biosynthesis; hydrogen sulfide from sulfite (NADPH route): step 1/1. Its function is as follows. Component of the sulfite reductase complex that catalyzes the 6-electron reduction of sulfite to sulfide. This is one of several activities required for the biosynthesis of L-cysteine from sulfate. This Yersinia pestis bv. Antiqua (strain Antiqua) protein is Sulfite reductase [NADPH] hemoprotein beta-component.